The sequence spans 233 residues: Probable GTP-binding protein EngB (233 aa).

Positions 31 to 205 constitute an EngB-type G domain; the sequence is TGVEIAFAGR…RRKLDTWFGP (175 aa). GTP is bound by residues 39 to 46, 66 to 70, 84 to 87, 151 to 154, and 184 to 186; these read GRSNAGKS, GRTQL, DLPG, TKAD, and FSS. Mg(2+)-binding residues include S46 and T68.

It belongs to the TRAFAC class TrmE-Era-EngA-EngB-Septin-like GTPase superfamily. EngB GTPase family. Mg(2+) is required as a cofactor.

Its function is as follows. Necessary for normal cell division and for the maintenance of normal septation. This chain is Probable GTP-binding protein EngB, found in Photobacterium profundum (strain SS9).